The primary structure comprises 246 residues: Short chain dehydrogenase/reductase dmxR12 (246 aa).

The NADP(+) site is built by isoleucine 15, serine 34, lysine 125, and lysine 164. Residue lysine 164 is the Lowers pKa of active site Tyr of the active site.

This sequence belongs to the short-chain dehydrogenases/reductases (SDR) family.

The protein operates within secondary metabolite biosynthesis. In terms of biological role, short chain dehydrogenase/reductase; part of the gene cluster that mediates the biosynthesis of the dimeric xanthones cryptosporioptides. The pathway begins with the synthesis of atrochrysone thioester by the polyketide synthase dmx-nrPKS. The atrochrysone carboxyl ACP thioesterase dmxR1 then breaks the thioester bond and releases the atrochrysone carboxylic acid from dmx-nrPKS. Atrochrysone carboxylic acid is decarboxylated by the decarboxylase dmxR15, and oxidized by the anthrone oxygenase dmxR16 to yield emodin. Emodin is then reduced to emodin hydroquinone by the oxidoreductase dmxR7. A-ring reduction by the short chain dehydrogenase dmxR18, dehydration by the scytalone dehydratase-like protein dmxR17 and probable spontaneous re-oxidation, results in overall deoxygenation to chrysophanol. Baeyer-Villiger oxidation by the Baeyer-Villiger monooxygenase (BVMO) dmxR6 then yields monodictylactone in equilibrium with monodictyphenone. In the case of the cryptosporioptides biosynthesis, monodictylactone is reduced at C-12 to an alcohol (by the short chain dehydrogenases dmxR12 or dmxR8) and hydroxylated at C-5 by dmxR9, yielding the electron-rich aromatic which could eliminate H(2)O to form the ortho-quinonemethide, followed by tautomerisation to paraquinone and complete the formal reduction to produce the 10-methylgroup. Conjugate addition of C-4a-OH to the resulting paraquinone by the monooxygenase dmxR10 then gives cyclohexadienone, which is then reduced at C-5 by the short chain dehydrogenase dmxR3 to give the dihydroxanthone. The 6,7-epoxide in the cryptosporioptides could be introduced by the cytochrome P450 monooxygenase dmxL3. The highly reducing PKS dmxL2 manufactures butyrate, which is further carboxylated by dmxL1 to form ethylmalonate. It is not yet clear whether the carboxylation occurs while the butyrate is attached to the ACP of dmxL2, but this unusual fungal metabolite could then be esterified to O-5 by the O-acetyltransferase dmxR13. Finally, dimerization performed by dmxR5 gives the observed dimers cryptosporioptides A, B and C as the final products of the pathway. The chain is Short chain dehydrogenase/reductase dmxR12 from Cryptosporiopsis sp. (strain 8999).